The following is a 218-amino-acid chain: Cell division protein SepF (218 aa).

Residues 25–115 (DVAASTDNVI…IANRREQYQQ (91 aa)) form a disordered region. The span at 29 to 43 (STDNVIPRSQQSVRA) shows a compositional bias: polar residues. Positions 47-63 (PKQEPRNNHVQQDHQAR) are enriched in basic and acidic residues.

It belongs to the SepF family. In terms of assembly, homodimer. Interacts with FtsZ.

It is found in the cytoplasm. Its function is as follows. Cell division protein that is part of the divisome complex and is recruited early to the Z-ring. Probably stimulates Z-ring formation, perhaps through the cross-linking of FtsZ protofilaments. Its function overlaps with FtsA. The polypeptide is Cell division protein SepF (Streptococcus pyogenes serotype M12 (strain MGAS2096)).